A 26-amino-acid polypeptide reads, in one-letter code: MIAPIFAELAKTVGADKDGLPTLVAK.

It belongs to the thioredoxin family. Plant H-type subfamily.

The protein resides in the cytoplasm. In terms of biological role, participates in various redox reactions through the reversible oxidation of the active center dithiol to a disulfide. The H form is known to activate a number of cytosolic enzymes. The chain is Thioredoxin H-type from Populus euphratica (Euphrates poplar).